The following is a 141-amino-acid chain: Large ribosomal subunit protein uL13 (141 aa).

This sequence belongs to the universal ribosomal protein uL13 family. In terms of assembly, part of the 50S ribosomal subunit.

Its function is as follows. This protein is one of the early assembly proteins of the 50S ribosomal subunit, although it is not seen to bind rRNA by itself. It is important during the early stages of 50S assembly. In Helicobacter pylori (strain G27), this protein is Large ribosomal subunit protein uL13.